Reading from the N-terminus, the 160-residue chain is NADH-quinone oxidoreductase subunit B (160 aa).

[4Fe-4S] cluster-binding residues include Cys-37, Cys-38, Cys-102, and Cys-132.

This sequence belongs to the complex I 20 kDa subunit family. As to quaternary structure, NDH-1 is composed of 14 different subunits. Subunits NuoB, C, D, E, F, and G constitute the peripheral sector of the complex. Requires [4Fe-4S] cluster as cofactor.

The protein resides in the cell inner membrane. The catalysed reaction is a quinone + NADH + 5 H(+)(in) = a quinol + NAD(+) + 4 H(+)(out). NDH-1 shuttles electrons from NADH, via FMN and iron-sulfur (Fe-S) centers, to quinones in the respiratory chain. Couples the redox reaction to proton translocation (for every two electrons transferred, four hydrogen ions are translocated across the cytoplasmic membrane), and thus conserves the redox energy in a proton gradient. In Cupriavidus pinatubonensis (strain JMP 134 / LMG 1197) (Cupriavidus necator (strain JMP 134)), this protein is NADH-quinone oxidoreductase subunit B.